Here is a 321-residue protein sequence, read N- to C-terminus: uncharacterized protein (321 aa).

Position 2 is an N-acetylvaline (valine 2). The interval 37–63 (SEASRLLTPQTSSNHALSKMQKDDDIR) is disordered. Positions 43–52 (LTPQTSSNHA) are enriched in polar residues. Threonine 44 is modified (phosphothreonine). Phosphoserine is present on residues serine 49, serine 69, serine 121, serine 126, serine 129, serine 137, and serine 139. Disordered regions lie at residues 115-270 (KKQR…YSIS) and 283-321 (ETLEEEQEDAEKEGVLMEDEGNEEYTKDLEEAANKAQPQ). Polar residues-rich tracts occupy residues 120 to 145 (KSINSESFSSPSLRASKSNSLITSTD), 153 to 162 (KYSSSGTPEN), and 178 to 189 (SYGQMIKNNSNR). Residue threonine 159 is modified to Phosphothreonine. Over residues 204-229 (EIDHTAPEKSEKRQERSGRSFDRQKS) the composition is skewed to basic and acidic residues. Over residues 237 to 253 (LSRSISRGPTKNKTVSP) the composition is skewed to polar residues. A phosphoserine mark is found at serine 238, serine 240, serine 242, and serine 270. Over residues 284–305 (TLEEEQEDAEKEGVLMEDEGNE) the composition is skewed to acidic residues. Over residues 306 to 315 (EYTKDLEEAA) the composition is skewed to basic and acidic residues.

The protein localises to the cytoplasm. This is an uncharacterized protein from Saccharomyces cerevisiae (strain ATCC 204508 / S288c) (Baker's yeast).